Here is a 311-residue protein sequence, read N- to C-terminus: Glutaminase (311 aa).

Substrate is bound by residues Ser-69, Asn-120, Glu-164, Asn-171, Tyr-195, Tyr-247, and Val-265.

Belongs to the glutaminase family. In terms of assembly, homotetramer.

The catalysed reaction is L-glutamine + H2O = L-glutamate + NH4(+). This chain is Glutaminase, found in Colwellia psychrerythraea (strain 34H / ATCC BAA-681) (Vibrio psychroerythus).